A 225-amino-acid chain; its full sequence is Insulin-induced gene 2 protein (225 aa).

At 1-28 the chain is on the cytoplasmic side; that stretch reads MAEGETESPRPKKRGPYISSVTSQSVNV. The chain crosses the membrane as a helical span at residues 29-51; the sequence is VIRGVVLFFIGVFLALVLNLLQI. Residues 52–70 lie on the Lumenal side of the membrane; the sequence is QRNVTLFPPDVITSIFSSA. Residues 71 to 88 traverse the membrane as a helical segment; sequence WWVPPCCGTASAVIGLLY. At 89 to 103 the chain is on the cytoplasmic side; it reads PCIDRHLGEPHKFKR. A helical transmembrane segment spans residues 104–126; sequence EWSSVMRCVAVFVGINHASAKVD. The Lumenal segment spans residues 127–129; that stretch reads FDN. Residues 130–148 traverse the membrane as a helical segment; the sequence is NFQFSLTLAALSVGLWWTF. At 149–153 the chain is on the cytoplasmic side; the sequence is DRSRS. Phosphoserine is present on S151. Residues 154-175 traverse the membrane as a helical segment; sequence GFGLGVGIAFLATVVTQLLVYN. The Lumenal portion of the chain corresponds to 176–189; the sequence is GVYQYTSPDFLYVR. Residues 190 to 207 form a helical membrane-spanning segment; sequence SWLPCIFFAGGITMGNIG. At 208–225 the chain is on the cytoplasmic side; it reads RQLAMYECKVIAEKSHQE. At C215 the chain carries Cysteine sulfenic acid (-SOH); alternate. Residue C215 forms a Glycyl cysteine thioester (Cys-Gly) (interchain with G-Cter in ubiquitin); alternate linkage. A KxHxx motif is present at residues 219 to 225; the sequence is AEKSHQE.

Belongs to the INSIG family. Interacts with SCAP; interaction is direct and only takes place in the presence of sterols; it prevents interaction between SCAP and the coat protein complex II (COPII). Associates with the SCAP-SREBP complex (composed of SCAP and SREBF1/SREBP1 or SREBF2/SREBP2); association is mediated via its interaction with SCAP and only takes place in the presence of sterols. Interacts with RNF139. Interacts with RNF145. In terms of processing, phosphorylation at Ser-151 by PCK1 reduces binding to oxysterol, disrupting the interaction between INSIG2 and SCAP, thereby promoting nuclear translocation of SREBP proteins (SREBF1/SREBP1 or SREBF2/SREBP2) and subsequent transcription of downstream lipogenesis-related genes. Post-translationally, polyubiquitinated by AMFR/gp78 at Cys-215 in some tissues such as adipose tissues, undifferentiated myoblasts and liver, leading to its degradation. In differentiated myotubes, Cys-215 oxidation prevents ubiquitination at the same site, resulting in protein stabilization. Oxidized at Cys-215 in differentiated myotubes, preventing ubiquitination at the same site, and resulting in protein stabilization.

The protein resides in the endoplasmic reticulum membrane. In terms of biological role, oxysterol-binding protein that mediates feedback control of cholesterol synthesis by controlling both endoplasmic reticulum to Golgi transport of SCAP and degradation of HMGCR. Acts as a negative regulator of cholesterol biosynthesis by mediating the retention of the SCAP-SREBP complex in the endoplasmic reticulum, thereby blocking the processing of sterol regulatory element-binding proteins (SREBPs) SREBF1/SREBP1 and SREBF2/SREBP2. Binds oxysterol, including 22-hydroxycholesterol, 24-hydroxycholesterol, 25-hydroxycholesterol and 27-hydroxycholesterol, regulating interaction with SCAP and retention of the SCAP-SREBP complex in the endoplasmic reticulum. In presence of oxysterol, interacts with SCAP, retaining the SCAP-SREBP complex in the endoplasmic reticulum, thereby preventing SCAP from escorting SREBF1/SREBP1 and SREBF2/SREBP2 to the Golgi. Sterol deprivation or phosphorylation by PCK1 reduce oxysterol-binding, disrupting the interaction between INSIG2 and SCAP, thereby promoting Golgi transport of the SCAP-SREBP complex, followed by processing and nuclear translocation of SREBF1/SREBP1 and SREBF2/SREBP2. Also regulates cholesterol synthesis by regulating degradation of HMGCR: initiates the sterol-mediated ubiquitin-mediated endoplasmic reticulum-associated degradation (ERAD) of HMGCR via recruitment of the reductase to the ubiquitin ligase RNF139. The protein is Insulin-induced gene 2 protein of Rattus norvegicus (Rat).